Here is a 307-residue protein sequence, read N- to C-terminus: Small ribosomal subunit protein uS2 (307 aa).

A disordered region spans residues glycine 256–alanine 307. Low complexity predominate over residues alanine 259 to alanine 307.

The protein belongs to the universal ribosomal protein uS2 family.

The sequence is that of Small ribosomal subunit protein uS2 from Nocardioides sp. (strain ATCC BAA-499 / JS614).